The sequence spans 334 residues: tRNA N6-adenosine threonylcarbamoyltransferase (334 aa).

The Fe cation site is built by H110 and H114. Residues 133 to 137 (IVSGG), D166, G179, D183, and N275 each bind substrate. D303 contacts Fe cation.

It belongs to the KAE1 / TsaD family. Fe(2+) serves as cofactor.

The protein localises to the cytoplasm. The enzyme catalyses L-threonylcarbamoyladenylate + adenosine(37) in tRNA = N(6)-L-threonylcarbamoyladenosine(37) in tRNA + AMP + H(+). Its function is as follows. Required for the formation of a threonylcarbamoyl group on adenosine at position 37 (t(6)A37) in tRNAs that read codons beginning with adenine. Is involved in the transfer of the threonylcarbamoyl moiety of threonylcarbamoyl-AMP (TC-AMP) to the N6 group of A37, together with TsaE and TsaB. TsaD likely plays a direct catalytic role in this reaction. The sequence is that of tRNA N6-adenosine threonylcarbamoyltransferase from Salinibacter ruber (strain DSM 13855 / M31).